The sequence spans 235 residues: Phosphoribosylaminoimidazole-succinocarboxamide synthase (235 aa).

Belongs to the SAICAR synthetase family.

The catalysed reaction is 5-amino-1-(5-phospho-D-ribosyl)imidazole-4-carboxylate + L-aspartate + ATP = (2S)-2-[5-amino-1-(5-phospho-beta-D-ribosyl)imidazole-4-carboxamido]succinate + ADP + phosphate + 2 H(+). It participates in purine metabolism; IMP biosynthesis via de novo pathway; 5-amino-1-(5-phospho-D-ribosyl)imidazole-4-carboxamide from 5-amino-1-(5-phospho-D-ribosyl)imidazole-4-carboxylate: step 1/2. The chain is Phosphoribosylaminoimidazole-succinocarboxamide synthase from Thermoanaerobacter pseudethanolicus (strain ATCC 33223 / 39E) (Clostridium thermohydrosulfuricum).